Reading from the N-terminus, the 536-residue chain is CTP synthase (536 aa).

An amidoligase domain region spans residues 1–267; that stretch reads MSKFVFVTGG…CKETLRCLDL (267 aa). S13 is a CTP binding site. S13 is a UTP binding site. ATP is bound by residues 14–19 and D71; that span reads SIGKGI. The Mg(2+) site is built by D71 and E141. CTP is bound by residues 148-150, 188-193, and K224; these read DIE and KTKPTQ. UTP is bound by residues 188–193 and K224; that span reads KTKPTQ. The 243-residue stretch at 292-534 folds into the Glutamine amidotransferase type-1 domain; the sequence is KVALVGKYIE…IKASREKLEQ (243 aa). L-glutamine is bound at residue G354. C381 acts as the Nucleophile; for glutamine hydrolysis in catalysis. Residues 382–385, E405, and R462 contribute to the L-glutamine site; that span reads LGMQ. Residues H507 and E509 contribute to the active site.

It belongs to the CTP synthase family. Homotetramer.

It catalyses the reaction UTP + L-glutamine + ATP + H2O = CTP + L-glutamate + ADP + phosphate + 2 H(+). It carries out the reaction L-glutamine + H2O = L-glutamate + NH4(+). The enzyme catalyses UTP + NH4(+) + ATP = CTP + ADP + phosphate + 2 H(+). It functions in the pathway pyrimidine metabolism; CTP biosynthesis via de novo pathway; CTP from UDP: step 2/2. With respect to regulation, allosterically activated by GTP, when glutamine is the substrate; GTP has no effect on the reaction when ammonia is the substrate. The allosteric effector GTP functions by stabilizing the protein conformation that binds the tetrahedral intermediate(s) formed during glutamine hydrolysis. Inhibited by the product CTP, via allosteric rather than competitive inhibition. In terms of biological role, catalyzes the ATP-dependent amination of UTP to CTP with either L-glutamine or ammonia as the source of nitrogen. Regulates intracellular CTP levels through interactions with the four ribonucleotide triphosphates. The chain is CTP synthase from Prochlorococcus marinus (strain MIT 9515).